The primary structure comprises 118 residues: UPF0342 protein BPUM_0928 (118 aa).

The protein belongs to the UPF0342 family.

The chain is UPF0342 protein BPUM_0928 from Bacillus pumilus (strain SAFR-032).